Here is a 469-residue protein sequence, read N- to C-terminus: 3-isopropylmalate dehydratase large subunit (469 aa).

[4Fe-4S] cluster-binding residues include cysteine 350, cysteine 410, and cysteine 413.

The protein belongs to the aconitase/IPM isomerase family. LeuC type 1 subfamily. As to quaternary structure, heterodimer of LeuC and LeuD. [4Fe-4S] cluster is required as a cofactor.

The enzyme catalyses (2R,3S)-3-isopropylmalate = (2S)-2-isopropylmalate. It functions in the pathway amino-acid biosynthesis; L-leucine biosynthesis; L-leucine from 3-methyl-2-oxobutanoate: step 2/4. Catalyzes the isomerization between 2-isopropylmalate and 3-isopropylmalate, via the formation of 2-isopropylmaleate. This is 3-isopropylmalate dehydratase large subunit from Rhodopseudomonas palustris (strain TIE-1).